Here is a 1908-residue protein sequence, read N- to C-terminus: Putative ankyrin repeat protein L484 (1908 aa).

5 ANK repeats span residues 20-50 (DIME…KFNI), 60-97 (PNKT…PMDL), 101-130 (DNVW…SIDR), 134-167 (SNNT…DIDK), and 1370-1399 (DGNT…NPFT). A coiled-coil region spans residues 1539–1603 (VQLLNPKLRD…QTNISDLEFK (65 aa)).

The protein localises to the virion. The protein is Putative ankyrin repeat protein L484 of Acanthamoeba polyphaga mimivirus (APMV).